Consider the following 859-residue polypeptide: Mismatch repair endonuclease PMS2 (859 aa).

The ATP site is built by asparagine 45, aspartate 70, glutamate 109, alanine 110, and leucine 111. Disordered stretches follow at residues 391-413 (ELEKPVPGKQDNSPSLKSTADEK), 427-455 (LHPTKEIKSRGPETAELTRSFPSEKRGVL), and 469-555 (RGSQ…KPED). 2 stretches are compositionally biased toward basic and acidic residues: residues 427–439 (LHPTKEIKSRGPE) and 485–495 (CMDREKIEKDS). A compositionally biased stretch (polar residues) spans 512–525 (EVASSFSSDYNVSS). The short motif at 574–577 (KRFK) is the Nuclear localization signal element. The tract at residues 578 to 597 (TEERPSNVNISQRLPGPQST) is disordered. Polar residues predominate over residues 583-597 (SNVNISQRLPGPQST).

Belongs to the DNA mismatch repair MutL/HexB family. Heterodimer of PMS2 and MLH1 (MutL alpha); this interaction is required for the stability of both partners. Forms a ternary complex with MutS alpha (MSH2-MSH6) or MutS beta (MSH2-MSH3). Part of the BRCA1-associated genome surveillance complex (BASC), which contains BRCA1, MSH2, MSH6, MLH1, ATM, BLM, PMS2 and the RAD50-MRE11-NBS1 protein complex. This association could be a dynamic process changing throughout the cell cycle and within subnuclear domains. Interacts with MTMR15/FAN1.

The protein localises to the nucleus. It carries out the reaction ATP + H2O = ADP + phosphate + H(+). Its function is as follows. Component of the post-replicative DNA mismatch repair system (MMR). Heterodimerizes with MLH1 to form MutL alpha. DNA repair is initiated by MutS alpha (MSH2-MSH6) or MutS beta (MSH2-MSH3) binding to a dsDNA mismatch, then MutL alpha is recruited to the heteroduplex. Assembly of the MutL-MutS-heteroduplex ternary complex in presence of RFC and PCNA is sufficient to activate endonuclease activity of PMS2. It introduces single-strand breaks near the mismatch and thus generates new entry points for the exonuclease EXO1 to degrade the strand containing the mismatch. DNA methylation would prevent cleavage and therefore assure that only the newly mutated DNA strand is going to be corrected. MutL alpha (MLH1-PMS2) interacts physically with the clamp loader subunits of DNA polymerase III, suggesting that it may play a role to recruit the DNA polymerase III to the site of the MMR. Also implicated in DNA damage signaling, a process which induces cell cycle arrest and can lead to apoptosis in case of major DNA damages. Possesses an ATPase activity, but in the absence of gross structural changes, ATP hydrolysis may not be necessary for proficient mismatch repair. This chain is Mismatch repair endonuclease PMS2, found in Mus musculus (Mouse).